The chain runs to 349 residues: 4-hydroxy-3-methylbut-2-en-1-yl diphosphate synthase (flavodoxin) (349 aa).

C265, C268, C300, and E307 together coordinate [4Fe-4S] cluster.

It belongs to the IspG family. [4Fe-4S] cluster serves as cofactor.

It catalyses the reaction (2E)-4-hydroxy-3-methylbut-2-enyl diphosphate + oxidized [flavodoxin] + H2O + 2 H(+) = 2-C-methyl-D-erythritol 2,4-cyclic diphosphate + reduced [flavodoxin]. It functions in the pathway isoprenoid biosynthesis; isopentenyl diphosphate biosynthesis via DXP pathway; isopentenyl diphosphate from 1-deoxy-D-xylulose 5-phosphate: step 5/6. Functionally, converts 2C-methyl-D-erythritol 2,4-cyclodiphosphate (ME-2,4cPP) into 1-hydroxy-2-methyl-2-(E)-butenyl 4-diphosphate. The sequence is that of 4-hydroxy-3-methylbut-2-en-1-yl diphosphate synthase (flavodoxin) from Thermodesulfovibrio yellowstonii (strain ATCC 51303 / DSM 11347 / YP87).